The sequence spans 412 residues: Serine hydroxymethyltransferase (412 aa).

(6S)-5,6,7,8-tetrahydrofolate contacts are provided by residues L121 and 125–127 (GHL). Residue K230 is modified to N6-(pyridoxal phosphate)lysine. Residue 353–355 (TPF) participates in (6S)-5,6,7,8-tetrahydrofolate binding.

The protein belongs to the SHMT family. As to quaternary structure, homodimer. Pyridoxal 5'-phosphate serves as cofactor.

It localises to the cytoplasm. It carries out the reaction (6R)-5,10-methylene-5,6,7,8-tetrahydrofolate + glycine + H2O = (6S)-5,6,7,8-tetrahydrofolate + L-serine. It participates in one-carbon metabolism; tetrahydrofolate interconversion. It functions in the pathway amino-acid biosynthesis; glycine biosynthesis; glycine from L-serine: step 1/1. Catalyzes the reversible interconversion of serine and glycine with tetrahydrofolate (THF) serving as the one-carbon carrier. This reaction serves as the major source of one-carbon groups required for the biosynthesis of purines, thymidylate, methionine, and other important biomolecules. Also exhibits THF-independent aldolase activity toward beta-hydroxyamino acids, producing glycine and aldehydes, via a retro-aldol mechanism. The chain is Serine hydroxymethyltransferase from Finegoldia magna (strain ATCC 29328 / DSM 20472 / WAL 2508) (Peptostreptococcus magnus).